A 311-amino-acid chain; its full sequence is Malate dehydrogenase (311 aa).

Gly-10 to Gly-15 contributes to the NAD(+) binding site. Positions 85 and 91 each coordinate substrate. NAD(+) contacts are provided by residues Asn-98 and Leu-121 to Asn-123. Asn-123 and Arg-154 together coordinate substrate. His-178 serves as the catalytic Proton acceptor.

Belongs to the LDH/MDH superfamily. MDH type 3 family.

The catalysed reaction is (S)-malate + NAD(+) = oxaloacetate + NADH + H(+). Catalyzes the reversible oxidation of malate to oxaloacetate. The protein is Malate dehydrogenase of Staphylococcus carnosus (strain TM300).